Reading from the N-terminus, the 246-residue chain is Probable aquaporin AqpM (246 aa).

Residues 1–12 are Cytoplasmic-facing; it reads MTMTLAKRFTAE. Residues 13–33 traverse the membrane as a helical segment; that stretch reads VVGTFILVFFGPGAAVITLMI. Residues 34–56 lie on the Extracellular side of the membrane; that stretch reads ANGADKPNEFNIGIGALGGLGDW. The chain crosses the membrane as a helical span at residues 57–77; the sequence is FAIGMAFALAIAAVIYSLGRI. Residues 78 to 104 are Cytoplasmic-facing; that stretch reads SGAHINPAVTIALWSIGRFPGREVVPY. Positions 83–85 match the NPA 1 motif; it reads NPA. Residues 105-125 form a helical membrane-spanning segment; sequence IVAQFIGAALGSLLFLACVGP. Topologically, residues 126-146 are extracellular; the sequence is AAATVGGLGATAPFPGIGYGQ. The chain crosses the membrane as a helical span at residues 147–167; the sequence is AILTEAIGTFLLMLVIMGVAV. Residues 168–173 are Cytoplasmic-facing; that stretch reads DERAPP. Residues 174-194 traverse the membrane as a helical segment; sequence GFAGLVIGLTVGGIITTIGNI. At 195–217 the chain is on the extracellular side; sequence TGSSLNPARTFGPYLGDSLMGIN. Residues 200–202 carry the NPA 2 motif; that stretch reads NPA. The chain crosses the membrane as a helical span at residues 218–238; sequence LWQYFPIYVIGPIVGAVAAAW. Over 239–246 the chain is Cytoplasmic; that stretch reads LYNYLAKE.

Belongs to the MIP/aquaporin (TC 1.A.8) family.

The protein resides in the cell membrane. In terms of biological role, channel that permits osmotically driven movement of water in both directions. The protein is Probable aquaporin AqpM (aqpM) of Archaeoglobus fulgidus (strain ATCC 49558 / DSM 4304 / JCM 9628 / NBRC 100126 / VC-16).